The following is a 646-amino-acid chain: Major capsid protein (646 aa).

Belongs to the NCLDV major capsid protein family. Homotrimer. The membrane-bound form, but not the cytosolic one, assembles into large complexes. Interacts with the minor capsid proteins M1249L and p17; these interactions form a rigid zipper structure that stabilizes the capsomers.

The protein resides in the virion. Its subcellular location is the host endoplasmic reticulum membrane. The protein localises to the host cytoplasm. It is found in the host cytosol. Capsid protein that self-assembles to form the pseudo-hexameric capsomers of the icosahedral capsid. The capsid is constructed of 2760 pseudo-hexameric capsomers and 12 pentameric capsomers, with a T=277 symmetry, about 200 nm in diameter. The capsid encapsulates the DNA-containing nucleoid, the core shell and the inner membrane. Plays an essential role in virion assembly. Involved in virus attachment to the host cell. The protein is Major capsid protein of Ornithodoros (relapsing fever ticks).